Consider the following 584-residue polypeptide: Arginine--tRNA ligase (584 aa).

The short motif at Pro130–His140 is the 'HIGH' region element.

The protein belongs to the class-I aminoacyl-tRNA synthetase family. Monomer.

Its subcellular location is the cytoplasm. The enzyme catalyses tRNA(Arg) + L-arginine + ATP = L-arginyl-tRNA(Arg) + AMP + diphosphate. The polypeptide is Arginine--tRNA ligase (Protochlamydia amoebophila (strain UWE25)).